The sequence spans 294 residues: 33 kDa chaperonin (294 aa).

2 disulfides stabilise this stretch: Cys-239–Cys-241 and Cys-272–Cys-275.

It belongs to the HSP33 family. Post-translationally, under oxidizing conditions two disulfide bonds are formed involving the reactive cysteines. Under reducing conditions zinc is bound to the reactive cysteines and the protein is inactive.

The protein localises to the cytoplasm. Functionally, redox regulated molecular chaperone. Protects both thermally unfolding and oxidatively damaged proteins from irreversible aggregation. Plays an important role in the bacterial defense system toward oxidative stress. The chain is 33 kDa chaperonin from Lacticaseibacillus casei (strain BL23) (Lactobacillus casei).